We begin with the raw amino-acid sequence, 407 residues long: Imidazolonepropionase (407 aa).

Residues histidine 74 and histidine 76 each contribute to the Fe(3+) site. 2 residues coordinate Zn(2+): histidine 74 and histidine 76. Residues arginine 83, tyrosine 146, and histidine 179 each coordinate 4-imidazolone-5-propanoate. Tyrosine 146 contacts N-formimidoyl-L-glutamate. Histidine 244 contacts Fe(3+). A Zn(2+)-binding site is contributed by histidine 244. Position 247 (glutamine 247) interacts with 4-imidazolone-5-propanoate. Residue aspartate 319 coordinates Fe(3+). Residue aspartate 319 coordinates Zn(2+). N-formimidoyl-L-glutamate contacts are provided by asparagine 321 and glycine 323. Threonine 324 is a binding site for 4-imidazolone-5-propanoate.

The protein belongs to the metallo-dependent hydrolases superfamily. HutI family. It depends on Zn(2+) as a cofactor. Fe(3+) is required as a cofactor.

The protein resides in the cytoplasm. The enzyme catalyses 4-imidazolone-5-propanoate + H2O = N-formimidoyl-L-glutamate. It functions in the pathway amino-acid degradation; L-histidine degradation into L-glutamate; N-formimidoyl-L-glutamate from L-histidine: step 3/3. In terms of biological role, catalyzes the hydrolytic cleavage of the carbon-nitrogen bond in imidazolone-5-propanoate to yield N-formimidoyl-L-glutamate. It is the third step in the universal histidine degradation pathway. The protein is Imidazolonepropionase of Salmonella typhimurium (strain LT2 / SGSC1412 / ATCC 700720).